Here is a 315-residue protein sequence, read N- to C-terminus: Methionyl-tRNA formyltransferase (315 aa).

Position 113 to 116 (113 to 116 (SLLP)) interacts with (6S)-5,6,7,8-tetrahydrofolate.

This sequence belongs to the Fmt family.

It carries out the reaction L-methionyl-tRNA(fMet) + (6R)-10-formyltetrahydrofolate = N-formyl-L-methionyl-tRNA(fMet) + (6S)-5,6,7,8-tetrahydrofolate + H(+). Attaches a formyl group to the free amino group of methionyl-tRNA(fMet). The formyl group appears to play a dual role in the initiator identity of N-formylmethionyl-tRNA by promoting its recognition by IF2 and preventing the misappropriation of this tRNA by the elongation apparatus. This chain is Methionyl-tRNA formyltransferase, found in Yersinia enterocolitica serotype O:8 / biotype 1B (strain NCTC 13174 / 8081).